The sequence spans 311 residues: Aspartate carbamoyltransferase catalytic subunit (311 aa).

Positions 55 and 56 each coordinate carbamoyl phosphate. K85 contacts L-aspartate. R106, H135, and Q138 together coordinate carbamoyl phosphate. L-aspartate contacts are provided by R168 and R230. Positions 268 and 269 each coordinate carbamoyl phosphate.

The protein belongs to the aspartate/ornithine carbamoyltransferase superfamily. ATCase family. As to quaternary structure, heterododecamer (2C3:3R2) of six catalytic PyrB chains organized as two trimers (C3), and six regulatory PyrI chains organized as three dimers (R2).

It catalyses the reaction carbamoyl phosphate + L-aspartate = N-carbamoyl-L-aspartate + phosphate + H(+). It functions in the pathway pyrimidine metabolism; UMP biosynthesis via de novo pathway; (S)-dihydroorotate from bicarbonate: step 2/3. Catalyzes the condensation of carbamoyl phosphate and aspartate to form carbamoyl aspartate and inorganic phosphate, the committed step in the de novo pyrimidine nucleotide biosynthesis pathway. In Serratia proteamaculans (strain 568), this protein is Aspartate carbamoyltransferase catalytic subunit.